Here is a 505-residue protein sequence, read N- to C-terminus: ATP synthase subunit alpha (505 aa).

170–177 (GDRQTGKT) is a binding site for ATP.

Belongs to the ATPase alpha/beta chains family. F-type ATPases have 2 components, CF(1) - the catalytic core - and CF(0) - the membrane proton channel. CF(1) has five subunits: alpha(3), beta(3), gamma(1), delta(1), epsilon(1). CF(0) has four main subunits: a(1), b(1), b'(1) and c(9-12).

The protein resides in the cellular thylakoid membrane. The catalysed reaction is ATP + H2O + 4 H(+)(in) = ADP + phosphate + 5 H(+)(out). Functionally, produces ATP from ADP in the presence of a proton gradient across the membrane. The alpha chain is a regulatory subunit. The chain is ATP synthase subunit alpha from Synechococcus elongatus (strain ATCC 33912 / PCC 7942 / FACHB-805) (Anacystis nidulans R2).